The sequence spans 337 residues: DNA-directed RNA polymerase subunit alpha (337 aa).

Residues 1-233 (MIREKVTVST…DLFIPFLHME (233 aa)) are alpha N-terminal domain (alpha-NTD). The interval 266 to 337 (KLALKSIFID…FAIDLPKNQF (72 aa)) is alpha C-terminal domain (alpha-CTD).

It belongs to the RNA polymerase alpha chain family. As to quaternary structure, in plastids the minimal PEP RNA polymerase catalytic core is composed of four subunits: alpha, beta, beta', and beta''. When a (nuclear-encoded) sigma factor is associated with the core the holoenzyme is formed, which can initiate transcription.

Its subcellular location is the plastid. It is found in the chloroplast. It catalyses the reaction RNA(n) + a ribonucleoside 5'-triphosphate = RNA(n+1) + diphosphate. DNA-dependent RNA polymerase catalyzes the transcription of DNA into RNA using the four ribonucleoside triphosphates as substrates. This Ipomoea purpurea (Common morning glory) protein is DNA-directed RNA polymerase subunit alpha.